A 147-amino-acid polypeptide reads, in one-letter code: uncharacterized protein (147 aa).

A Response regulatory domain is found at 1 to 59 (MGAELVKWVKSHKIDAHIITFVAKMPYIDSIKLLEAGAKGCVWKTSHPAKLNRAIDSIS). The HTH luxR-type domain occupies 78 to 143 (RYSSDNQLTN…ELIKTALRMG (66 aa)). Positions 102–121 (NKEIANFLQLSRKTVETHRL) form a DNA-binding region, H-T-H motif.

Post-translationally, overexpressed protein is phosphorylated in vitro by non-cognate histidine kinases BarA and UhpB.

This is an uncharacterized protein from Escherichia coli (strain K12).